Here is a 615-residue protein sequence, read N- to C-terminus: 1-deoxy-D-xylulose-5-phosphate synthase (615 aa).

Residues His-72 and 113–115 (GHA) each bind thiamine diphosphate. Position 144 (Asp-144) interacts with Mg(2+). Thiamine diphosphate-binding positions include 145–146 (GA), Asn-173, Tyr-281, and Glu-360. Position 173 (Asn-173) interacts with Mg(2+).

This sequence belongs to the transketolase family. DXPS subfamily. As to quaternary structure, homodimer. It depends on Mg(2+) as a cofactor. Thiamine diphosphate is required as a cofactor.

The enzyme catalyses D-glyceraldehyde 3-phosphate + pyruvate + H(+) = 1-deoxy-D-xylulose 5-phosphate + CO2. It functions in the pathway metabolic intermediate biosynthesis; 1-deoxy-D-xylulose 5-phosphate biosynthesis; 1-deoxy-D-xylulose 5-phosphate from D-glyceraldehyde 3-phosphate and pyruvate: step 1/1. In terms of biological role, catalyzes the acyloin condensation reaction between C atoms 2 and 3 of pyruvate and glyceraldehyde 3-phosphate to yield 1-deoxy-D-xylulose-5-phosphate (DXP). The chain is 1-deoxy-D-xylulose-5-phosphate synthase from Thermus thermophilus (strain ATCC 27634 / DSM 579 / HB8).